The following is a 205-amino-acid chain: Peroxynitrite isomerase (205 aa).

The segment at 1 to 23 (MTEPDPAAAEQRPSVGRNLPTFQ) is disordered. The GXWXGXG motif lies at 52 to 58 (GVWRGEG). Threonine 63, lysine 168, and histidine 195 together coordinate heme b.

It belongs to the nitrobindin family. As to quaternary structure, homodimer. Requires heme b as cofactor.

It catalyses the reaction peroxynitrite = nitrate. Its pathway is nitrogen metabolism. In terms of biological role, heme-binding protein able to scavenge peroxynitrite and to protect free L-tyrosine against peroxynitrite-mediated nitration, by acting as a peroxynitrite isomerase that converts peroxynitrite to nitrate. Therefore, this protein likely plays a role in peroxynitrite sensing and in the detoxification of reactive nitrogen and oxygen species (RNS and ROS, respectively). Is able to bind nitric oxide (NO) in vitro, but may act as a sensor of peroxynitrite levels in vivo. The chain is Peroxynitrite isomerase from Mycobacteroides abscessus (strain ATCC 19977 / DSM 44196 / CCUG 20993 / CIP 104536 / JCM 13569 / NCTC 13031 / TMC 1543 / L948) (Mycobacterium abscessus).